The primary structure comprises 495 residues: Trigger factor (495 aa).

The PPIase FKBP-type domain occupies 162–243 (DDFVSIDLSA…VKSLKERELP (82 aa)). The span at 425-437 (DTDGNEIDPKEYF) shows a compositional bias: basic and acidic residues. Residues 425–495 (DTDGNEIDPK…TDDDSENAEK (71 aa)) form a disordered region. Over residues 450 to 461 (SADAEASENSEA) the composition is skewed to low complexity. The span at 486 to 495 (TDDDSENAEK) shows a compositional bias: acidic residues.

This sequence belongs to the FKBP-type PPIase family. Tig subfamily.

The protein localises to the cytoplasm. It catalyses the reaction [protein]-peptidylproline (omega=180) = [protein]-peptidylproline (omega=0). Its function is as follows. Involved in protein export. Acts as a chaperone by maintaining the newly synthesized protein in an open conformation. Functions as a peptidyl-prolyl cis-trans isomerase. The sequence is that of Trigger factor from Corynebacterium kroppenstedtii (strain DSM 44385 / JCM 11950 / CIP 105744 / CCUG 35717).